Reading from the N-terminus, the 461-residue chain is Bifunctional protein GlmU (461 aa).

The segment at 1 to 229 (MEKYVVVLAA…FSESLGVNDR (229 aa)) is pyrophosphorylase. Residues 8–11 (LAAG), lysine 22, glutamine 72, and 77–78 (GT) each bind UDP-N-acetyl-alpha-D-glucosamine. Aspartate 102 contacts Mg(2+). UDP-N-acetyl-alpha-D-glucosamine-binding residues include glycine 139, glutamate 154, asparagine 169, and asparagine 227. Asparagine 227 is a binding site for Mg(2+). The linker stretch occupies residues 230-250 (IALAEATRIMQRRINEGHMRD). The segment at 251-461 (GVTFIDPATA…LPLSEDEEWK (211 aa)) is N-acetyltransferase. UDP-N-acetyl-alpha-D-glucosamine is bound by residues arginine 332 and lysine 350. The active-site Proton acceptor is the histidine 362. The UDP-N-acetyl-alpha-D-glucosamine site is built by tyrosine 365 and asparagine 376. The acetyl-CoA site is built by alanine 422 and arginine 439.

In the N-terminal section; belongs to the N-acetylglucosamine-1-phosphate uridyltransferase family. It in the C-terminal section; belongs to the transferase hexapeptide repeat family. As to quaternary structure, homotrimer. Requires Mg(2+) as cofactor.

It is found in the cytoplasm. It catalyses the reaction alpha-D-glucosamine 1-phosphate + acetyl-CoA = N-acetyl-alpha-D-glucosamine 1-phosphate + CoA + H(+). The enzyme catalyses N-acetyl-alpha-D-glucosamine 1-phosphate + UTP + H(+) = UDP-N-acetyl-alpha-D-glucosamine + diphosphate. It functions in the pathway nucleotide-sugar biosynthesis; UDP-N-acetyl-alpha-D-glucosamine biosynthesis; N-acetyl-alpha-D-glucosamine 1-phosphate from alpha-D-glucosamine 6-phosphate (route II): step 2/2. Its pathway is nucleotide-sugar biosynthesis; UDP-N-acetyl-alpha-D-glucosamine biosynthesis; UDP-N-acetyl-alpha-D-glucosamine from N-acetyl-alpha-D-glucosamine 1-phosphate: step 1/1. The protein operates within bacterial outer membrane biogenesis; LPS lipid A biosynthesis. Functionally, catalyzes the last two sequential reactions in the de novo biosynthetic pathway for UDP-N-acetylglucosamine (UDP-GlcNAc). The C-terminal domain catalyzes the transfer of acetyl group from acetyl coenzyme A to glucosamine-1-phosphate (GlcN-1-P) to produce N-acetylglucosamine-1-phosphate (GlcNAc-1-P), which is converted into UDP-GlcNAc by the transfer of uridine 5-monophosphate (from uridine 5-triphosphate), a reaction catalyzed by the N-terminal domain. This Lactobacillus delbrueckii subsp. bulgaricus (strain ATCC BAA-365 / Lb-18) protein is Bifunctional protein GlmU.